Reading from the N-terminus, the 283-residue chain is Demethylrebeccamycin-D-glucose O-methyltransferase (283 aa).

Residues S101, Q106, 129 to 130, L146, and H151 contribute to the S-adenosyl-L-methionine site; that span reads DA.

This sequence belongs to the methyltransferase superfamily. In terms of assembly, monomer.

It catalyses the reaction 4'-demethylrebeccamycin + S-adenosyl-L-methionine = rebeccamycin + S-adenosyl-L-homocysteine + H(+). Its function is as follows. Glycosyl O-methyltransferase that catalyzes the final step in the biosynthesis of rebeccamycin, an indolocarbazole alkaloid that inhibits topoisomerase 1. Has broad substrate specificity and functions as glycosyl O-methyltransferase on a number of rebeccamycin analogs. The chain is Demethylrebeccamycin-D-glucose O-methyltransferase (rebM) from Lentzea aerocolonigenes (Lechevalieria aerocolonigenes).